The chain runs to 243 residues: MQFQLFSFVLIILNCVDYSHCQANRWRRSKRASYGTNPICKGCLSCSKDNGCLRCQPKLFFYLRREGMRQYGECLQSCPPGYYGVRGPDMNRCSRCRIENCDSCFSRDFCIKCKSGFYSHKGQCFEECPEGFAPLDDTMVCVDGCEVGPWSEWGTCSRNNRTCGFKWGLETRTRQIVKKPAKDTIPCPTIAESRRCKMAMRHCPGGTRTTKKKDKKNKKKKKKLLERAQEQHSVVLATDRSSQ.

A signal peptide spans 1 to 21; sequence MQFQLFSFVLIILNCVDYSHC. Cystine bridges form between C40–C46, C43–C52, C55–C74, C78–C93, C96–C104, C101–C110, C113–C124, C128–C141, C145–C187, C156–C163, and C196–C203. The FU repeat unit spans residues 90 to 134; sequence MNRCSRCRIENCDSCFSRDFCIKCKSGFYSHKGQCFEECPEGFAP. The 61-residue stretch at 144–204 folds into the TSP type-1 domain; the sequence is GCEVGPWSEW…RCKMAMRHCP (61 aa). An N-linked (GlcNAc...) asparagine glycan is attached at N160. The disordered stretch occupies residues 202–243; that stretch reads HCPGGTRTTKKKDKKNKKKKKKLLERAQEQHSVVLATDRSSQ. The span at 209–224 shows a compositional bias: basic residues; sequence TTKKKDKKNKKKKKKL.

It belongs to the R-spondin family. As to quaternary structure, binds heparin.

The protein resides in the secreted. Activator of the canonical Wnt signaling pathway by acting as a ligand for lgr4-6 receptors. Upon binding to lgr4-6 (lgr4, lgr5 or lgr6), lgr4-6 associate with phosphorylated lrp6 and frizzled receptors that are activated by extracellular Wnt receptors, triggering the canonical Wnt signaling pathway to increase expression of target genes. Acts both in the canonical. Wnt/beta-catenin-dependent pathway and in non-canonical Wnt signaling pathway. Activates neural markers and promotes muscle formation. Overexpression blocks activin, nodal and BMP4 signaling, suggesting that it may negatively regulate the TGF-beta pathway. During embryonic development, plays a crucial role in limb specification, amplifying the Wnt signaling pathway independently of LGR4-6 receptors, possibly by acting as a direct antagonistic ligand to RNF43 and ZNRF3, hence governing the number of limbs an embryo should form. This chain is R-spondin-2 (rspo2), found in Xenopus tropicalis (Western clawed frog).